The chain runs to 270 residues: Decarboxylase NovR (270 aa).

Belongs to the aldolase class II family.

The protein operates within antibiotic biosynthesis; novobiocin biosynthesis. In terms of biological role, may mediate the 2 consecutive oxidative decarboxylation steps in the biosynthesis of the prenylated hydroxybenzoic acid moiety of novobiocin, an aminocoumarin family antibiotic that targets bacterial DNA gyrases. In Streptomyces niveus (Streptomyces spheroides), this protein is Decarboxylase NovR (novR).